The sequence spans 196 residues: Ribonuclease H (196 aa).

In terms of domain architecture, RNase H type-1 spans 58 to 196 (LAKEEIIWES…GEIKADYGRK (139 aa)). Mg(2+)-binding residues include aspartate 71, glutamate 109, aspartate 132, and aspartate 192.

It belongs to the RNase H family. It depends on Mn(2+) as a cofactor. Mg(2+) is required as a cofactor.

The protein resides in the cytoplasm. It catalyses the reaction Endonucleolytic cleavage to 5'-phosphomonoester.. Endonuclease that specifically degrades the RNA of RNA-DNA hybrids. The chain is Ribonuclease H (rnhA) from Halalkalibacterium halodurans (strain ATCC BAA-125 / DSM 18197 / FERM 7344 / JCM 9153 / C-125) (Bacillus halodurans).